A 418-amino-acid chain; its full sequence is Tyrosine--tRNA ligase (418 aa).

Tyrosine 34 lines the L-tyrosine pocket. Residues 39–48 (PTADSLHLGH) carry the 'HIGH' region motif. L-tyrosine contacts are provided by tyrosine 169 and glutamine 173. A 'KMSKS' region motif is present at residues 229–233 (KFGKS). Lysine 232 is a binding site for ATP. One can recognise an S4 RNA-binding domain in the interval 352–418 (NNIVELLVSS…GKKKYFVLTY (67 aa)).

The protein belongs to the class-I aminoacyl-tRNA synthetase family. TyrS type 1 subfamily. Homodimer.

Its subcellular location is the cytoplasm. The enzyme catalyses tRNA(Tyr) + L-tyrosine + ATP = L-tyrosyl-tRNA(Tyr) + AMP + diphosphate + H(+). Catalyzes the attachment of tyrosine to tRNA(Tyr) in a two-step reaction: tyrosine is first activated by ATP to form Tyr-AMP and then transferred to the acceptor end of tRNA(Tyr). In Streptococcus pneumoniae (strain Taiwan19F-14), this protein is Tyrosine--tRNA ligase.